The chain runs to 366 residues: Dehydrogenase aclE (366 aa).

The signal sequence occupies residues 1–19 (MSKRIRLGIVGLSADPSHC). N-linked (GlcNAc...) asparagine glycosylation is present at Asn330.

The protein belongs to the Gfo/Idh/MocA family.

It functions in the pathway mycotoxin biosynthesis. Its function is as follows. Dehydrogenase; part of the gene cluster that mediates the biosynthesis of aspirochlorine (or antibiotic A30641), an unusual halogenated spiro compound with distinctive antifungal properties due to selective inhibition of protein biosynthesis, and which is also active against bacteria, viruses, and murine tumor cells. The non-ribosomal peptide synthetase (NRPS) aclP is responsible the formation of the diketopiperazine (DKP) core from the condensation of 2 phenylalanine residues. One Phe residue is tailored into chlorotyrosine by hydroxylation and chlorination, whereas the second Phe undergoes an unprecedented C-C bond cleavage to be converted into glycine. After formation of the DKP, sulfur is incorporated into the DKP by conjugation with glutathione by aclG, followed by its stepwise degradation to the thiol by aclI, aclJ and aclK, and the dithiol oxidation by aclT. In addition, oxygenases (aclB, aclC, aclL and aclO) and O-methyltransferases (aclM and aclU) act as tailoring enzymes to produce the intermediate dechloroaspirochlorine. Ultimately, chlorination of dechloroaspirochlorine by the halogenase aclH is the last step in the aspirochlorine pathway. This Aspergillus oryzae (strain ATCC 42149 / RIB 40) (Yellow koji mold) protein is Dehydrogenase aclE.